The chain runs to 179 residues: Replication restart protein DnaT (179 aa).

The interval 156–179 (GGLPKRDVNTVSEPDSQIPPGFRG) is disordered.

Belongs to the DnaT family. Homooligomerizes. Interacts with PriB. Component of the replication restart primosome. Primosome assembly occurs via a 'hand-off' mechanism. PriA binds to replication forks, subsequently PriB then DnaT bind; DnaT then displaces ssDNA to generate the helicase loading substrate.

Involved in the restart of stalled replication forks, which reloads the replicative helicase on sites other than the origin of replication. Can function in multiple replication restart pathways. Displaces ssDNA from a PriB-ssDNA complex. Probably forms a spiral filament on ssDNA. The polypeptide is Replication restart protein DnaT (Escherichia coli O17:K52:H18 (strain UMN026 / ExPEC)).